The sequence spans 98 residues: NADH-ubiquinone oxidoreductase chain 4L (98 aa).

Helical transmembrane passes span M1–M21, S29–L49, and I61–V81.

The protein belongs to the complex I subunit 4L family. Core subunit of respiratory chain NADH dehydrogenase (Complex I) which is composed of 45 different subunits.

The protein localises to the mitochondrion inner membrane. The catalysed reaction is a ubiquinone + NADH + 5 H(+)(in) = a ubiquinol + NAD(+) + 4 H(+)(out). Its function is as follows. Core subunit of the mitochondrial membrane respiratory chain NADH dehydrogenase (Complex I) which catalyzes electron transfer from NADH through the respiratory chain, using ubiquinone as an electron acceptor. Part of the enzyme membrane arm which is embedded in the lipid bilayer and involved in proton translocation. In Pseudosoriculus fumidus (Taiwanese brown-toothed shrew), this protein is NADH-ubiquinone oxidoreductase chain 4L (MT-ND4L).